The following is a 272-amino-acid chain: 3-deoxy-manno-octulosonate cytidylyltransferase (272 aa).

It belongs to the KdsB family.

The protein localises to the cytoplasm. It catalyses the reaction 3-deoxy-alpha-D-manno-oct-2-ulosonate + CTP = CMP-3-deoxy-beta-D-manno-octulosonate + diphosphate. Its pathway is nucleotide-sugar biosynthesis; CMP-3-deoxy-D-manno-octulosonate biosynthesis; CMP-3-deoxy-D-manno-octulosonate from 3-deoxy-D-manno-octulosonate and CTP: step 1/1. It participates in bacterial outer membrane biogenesis; lipopolysaccharide biosynthesis. Functionally, activates KDO (a required 8-carbon sugar) for incorporation into bacterial lipopolysaccharide in Gram-negative bacteria. The protein is 3-deoxy-manno-octulosonate cytidylyltransferase of Verminephrobacter eiseniae (strain EF01-2).